The chain runs to 920 residues: Plasma membrane ATPase (920 aa).

The disordered stretch occupies residues 1–77 (MADHSASGAP…TPGGGRVVPE (77 aa)). The Cytoplasmic portion of the chain corresponds to 1-115 (MADHSASGAP…KEEKENHFLK (115 aa)). A compositionally biased stretch (acidic residues) spans 38–51 (EDDEDEDIDALIED). A helical membrane pass occupies residues 116–138 (FLGFFVGPIQFVMEGAAVLAAGL). Over 139–140 (ED) the chain is Extracellular. Residues 141-160 (WVDFGVICGLLLLNAVVGFV) form a helical membrane-spanning segment. Residues 161-291 (QEFQAGSIVD…GSGHFTEVLN (131 aa)) lie on the Cytoplasmic side of the membrane. Residues 292-314 (GIGTILLILVIFTLLIVWVSSFY) form a helical membrane-spanning segment. The Extracellular segment spans residues 315 to 321 (RSNPIVQ). The helical transmembrane segment at 322 to 354 (ILEFTLAITIIGVPVGLPAVVTTTMAVGAAYLA) threads the bilayer. Topologically, residues 355–687 (KKKAIVQKLS…LKTSRQIFHR (333 aa)) are cytoplasmic. The active-site 4-aspartylphosphate intermediate is Asp378. Residues Asp634 and Asp638 each coordinate Mg(2+). Residues 688–713 (MYAYVVYRIALSIHLEIFLGLWIAIL) form a helical membrane-spanning segment. The Extracellular portion of the chain corresponds to 714-720 (NRSLNIE). A helical transmembrane segment spans residues 721–738 (LVVFIAIFADVATLAIAY). At 739-754 (DNAPYSQTPVKWNLPK) the chain is on the cytoplasmic side. The chain crosses the membrane as a helical span at residues 755–779 (LWGMSVLLGVVLAVGTWITVTTMYA). Topologically, residues 780–806 (QGENGGIVQNFGNMDEVLFLQISLTEN) are extracellular. Helical transmembrane passes span 807-826 (WLIFITRANGPFWSSIPSWQ) and 827-847 (LSGAIFLVDILATCFTIWGWF). The Extracellular segment spans residues 848–853 (EHSDTS). The chain crosses the membrane as a helical span at residues 854 to 878 (IVAVVRIWIFSFGIFCIMGGVYYIL). The Cytoplasmic segment spans residues 879–920 (QDSVGFDNLMHGKSPKGNQKQRSLEDFVVSLQRVSTQHEKSQ).

It belongs to the cation transport ATPase (P-type) (TC 3.A.3) family. Type IIIA subfamily.

It localises to the cell membrane. It carries out the reaction ATP + H2O + H(+)(in) = ADP + phosphate + 2 H(+)(out). Its function is as follows. The plasma membrane ATPase of plants and fungi is a hydrogen ion pump. The proton gradient it generates drives the active transport of nutrients by H(+)-symport. The resulting external acidification and/or internal alkinization may mediate growth responses. The sequence is that of Plasma membrane ATPase (pma-1) from Neurospora crassa (strain ATCC 24698 / 74-OR23-1A / CBS 708.71 / DSM 1257 / FGSC 987).